The following is a 197-amino-acid chain: Large ribosomal subunit protein eL15 (197 aa).

Basic residues-rich tracts occupy residues 70–90 (PKGG…RMGK), 163–179 (RGKT…RKRG), and 187–197 (PSLRAHRRRGK). Disordered stretches follow at residues 70-99 (PKGG…GKSK) and 163-197 (RGKT…RRGK).

It belongs to the eukaryotic ribosomal protein eL15 family.

The sequence is that of Large ribosomal subunit protein eL15 from Methanopyrus kandleri (strain AV19 / DSM 6324 / JCM 9639 / NBRC 100938).